A 240-amino-acid polypeptide reads, in one-letter code: 7-cyano-7-deazaguanine synthase (240 aa).

18–28 (FSGGQDSTTCL) lines the ATP pocket. Zn(2+) contacts are provided by Cys-197, Cys-206, Cys-209, and Cys-212.

This sequence belongs to the QueC family. Zn(2+) is required as a cofactor.

It carries out the reaction 7-carboxy-7-deazaguanine + NH4(+) + ATP = 7-cyano-7-deazaguanine + ADP + phosphate + H2O + H(+). It participates in purine metabolism; 7-cyano-7-deazaguanine biosynthesis. In terms of biological role, catalyzes the ATP-dependent conversion of 7-carboxy-7-deazaguanine (CDG) to 7-cyano-7-deazaguanine (preQ(0)). This chain is 7-cyano-7-deazaguanine synthase, found in Shewanella putrefaciens (strain CN-32 / ATCC BAA-453).